The chain runs to 314 residues: MKRAPTKQPAKPAARGGERAQGRVIAAHGRHYIVAPADGGPMLQCFPRGKKSEVAVGDRVAYERTSADQGVIVEIGERRNLLYRSDQFKSKLFAANLDQLLIVLATEPYFSEDLLGRALIAAEANELKPIVVLNKIDVEAALPVARERLAPYRALGYDVLELSVKGAPDDARTQLAPRLAGHSTILLGQSGMGKSTLVNLLVPDAEAATREISAALNSGRHTTTFTRLYPLQDGGALIDSPGFQEFGLYHLTEGRLERAFPEFRPLLAHCRFYNCHHLHEPGCAILEALADGRIAPTRHALYAQLVHEASQIVR.

The tract at residues 1–21 (MKRAPTKQPAKPAARGGERAQ) is disordered. One can recognise a CP-type G domain in the interval 85-246 (SDQFKSKLFA…LIDSPGFQEF (162 aa)). Residues 134-137 (NKID) and 188-196 (GQSGMGKST) each bind GTP. Zn(2+) is bound by residues cysteine 270, cysteine 275, histidine 277, and cysteine 283.

This sequence belongs to the TRAFAC class YlqF/YawG GTPase family. RsgA subfamily. As to quaternary structure, monomer. Associates with 30S ribosomal subunit, binds 16S rRNA. Zn(2+) is required as a cofactor.

It is found in the cytoplasm. In terms of biological role, one of several proteins that assist in the late maturation steps of the functional core of the 30S ribosomal subunit. Helps release RbfA from mature subunits. May play a role in the assembly of ribosomal proteins into the subunit. Circularly permuted GTPase that catalyzes slow GTP hydrolysis, GTPase activity is stimulated by the 30S ribosomal subunit. This chain is Small ribosomal subunit biogenesis GTPase RsgA, found in Burkholderia pseudomallei (strain 1710b).